The sequence spans 1183 residues: Protein deacetylase HDAC6 (1183 aa).

The interval 1-61 (MTSTGQDSST…KGKMKKLSQP (61 aa)) is disordered. Over residues 18–29 (NPQSPLQDSSAT) the composition is skewed to polar residues. S21 is modified (phosphoserine). An Omega-N-methylarginine modification is found at R32. A Nuclear export signal motif is present at residues 66–75 (LIVGLQGLDL). 2 histone deacetylase regions span residues 86-434 (GLVF…TLLG) and 512-830 (GLVY…SLLG). H215 functions as the 1 in the catalytic mechanism. The active-site 2 is the H641. The disordered stretch occupies residues 972–1042 (ATENSANQTT…EAQEVQESEE (71 aa)). Residues 980–996 (TTSGEEASGETESFGTS) show a composition bias toward low complexity. Phosphothreonine is present on residues T990, T995, and T1005. Residues 997 to 1008 (PSSNASKQTTGA) are compositionally biased toward polar residues. S1009 carries the post-translational modification Phosphoserine. Low complexity predominate over residues 1021 to 1035 (ELGLSSTLELSSEAQ). The segment at 1079 to 1177 (SWCPHLMAVC…NAAHQNKFGE (99 aa)) adopts a UBP-type zinc-finger fold. Zn(2+)-binding residues include C1081, H1083, C1101, C1104, C1113, C1116, and C1121. The tract at residues 1122–1124 (SRY) is ubiquitin binding. 5 residues coordinate Zn(2+): H1128, H1132, H1138, C1151, and C1154. The tract at residues 1150–1157 (WCYLCQAY) is ubiquitin binding.

The protein belongs to the histone deacetylase family. HD type 2 subfamily. As to quaternary structure, forms a trimeric complex in the nucleus consisting of BANP, HDAC6 and KHDRBS1/SAM68; HDAC6 keeps KHDRBS1 in a deacetylated state which inhibits the inclusion of CD44 alternate exons. The complex is disrupted by MAPK1/MAPK3-mediated phosphorylation of BANP which results in BANP export to the cytoplasm. This facilitates acetylation of KHDRBS1 and CD44 variant exon inclusion. Interacts with SIRT2 (via both phosphorylated, unphosphorylated, active or inactive forms); the interaction is necessary for the complex to interact with alpha-tubulin. Under proteasome impairment conditions, interacts with UBD via its histone deacetylase 1 and UBP-type zinc-finger regions. Interacts with BBIP1, CBFA2T3, CYLD, DDIT3/CHOP, ZMYND15, F-actin and HDAC11. Interacts with RIPOR2; this interaction occurs during early myogenic differentiation and prevents HDAC6 to deacetylate tubulin. Interacts with AURKA; AURKA-mediated phosphorylation of HDAC6 promotes deacetylation of alpha-tubulin. Interacts with DYSF; this interaction occurs during early myogenic differentiation. Interacts with TPPP; inhibiting the tubulin deacetylase activity of HDAC6. Interacts with DYNLL1. Interacts with ATP13A2; the interaction results in recruitment of HDAC6 to lysosomes to promote CTTN deacetylation. Interacts with CCDC141 (via the N-terminal region); inhibiting the deacetylase activity of HDAC6. Interacts with IPO7; the interaction facilitates HDAC6 nuclear translocation in dental papilla cells. Requires Zn(2+) as cofactor. In terms of processing, phosphorylated by AURKA; phosphorylation increases HDAC6-mediated deacetylation of alpha-tubulin and subsequent disassembly of cilia. Post-translationally, ubiquitinated. Its polyubiquitination however does not lead to its degradation. Sumoylated in vitro.

The protein localises to the cytoplasm. Its subcellular location is the cytoskeleton. It is found in the nucleus. The protein resides in the perikaryon. It localises to the cell projection. The protein localises to the dendrite. Its subcellular location is the axon. It is found in the cilium. The protein resides in the microtubule organizing center. It localises to the centrosome. The protein localises to the cilium basal body. The catalysed reaction is N(6)-acetyl-L-lysyl-[protein] + H2O = L-lysyl-[protein] + acetate. It catalyses the reaction N(6)-acetyl-L-lysyl-[alpha-tubulin] + H2O = L-lysyl-[alpha-tubulin] + acetate. Its pathway is protein modification; protein ubiquitination. In terms of biological role, deacetylates a wide range of non-histone substrates. Plays a central role in microtubule-dependent cell motility by mediating deacetylation of tubulin. Required for cilia disassembly via deacetylation of alpha-tubulin. Alpha-tubulin deacetylation results in destabilization of dynamic microtubules. Promotes deacetylation of CTTN, leading to actin polymerization, promotion of autophagosome-lysosome fusion and completion of autophagy. Deacetylates SQSTM1. Deacetylates peroxiredoxins PRDX1 and PRDX2, decreasing their reducing activity. Deacetylates antiviral protein RIGI in the presence of viral mRNAs which is required for viral RNA detection by RIGI. Sequentially deacetylates and polyubiquitinates DNA mismatch repair protein MSH2 which leads to MSH2 degradation, reducing cellular sensitivity to DNA-damaging agents and decreasing cellular DNA mismatch repair activities. Deacetylates DNA mismatch repair protein MLH1 which prevents recruitment of the MutL alpha complex (formed by the MLH1-PMS2 heterodimer) to the MutS alpha complex (formed by the MSH2-MSH6 heterodimer), leading to tolerance of DNA damage. Deacetylates RHOT1/MIRO1 which blocks mitochondrial transport and mediates axon growth inhibition. Deacetylates transcription factor SP1 which leads to increased expression of ENG, positively regulating angiogenesis. Deacetylates KHDRBS1/SAM68 which regulates alternative splicing by inhibiting the inclusion of CD44 alternate exons. Promotes odontoblast differentiation following IPO7-mediated nuclear import and subsequent repression of RUNX2 expression. In addition to its protein deacetylase activity, plays a key role in the degradation of misfolded proteins: when misfolded proteins are too abundant to be degraded by the chaperone refolding system and the ubiquitin-proteasome, mediates the transport of misfolded proteins to a cytoplasmic juxtanuclear structure called aggresome. Probably acts as an adapter that recognizes polyubiquitinated misfolded proteins and targets them to the aggresome, facilitating their clearance by autophagy. In Rattus norvegicus (Rat), this protein is Protein deacetylase HDAC6.